The chain runs to 419 residues: UDP-N-acetylglucosamine 1-carboxyvinyltransferase (419 aa).

22 to 23 (KN) provides a ligand contact to phosphoenolpyruvate. UDP-N-acetyl-alpha-D-glucosamine is bound at residue Arg91. The Proton donor role is filled by Cys115. Cys115 bears the 2-(S-cysteinyl)pyruvic acid O-phosphothioketal mark. UDP-N-acetyl-alpha-D-glucosamine-binding positions include 120–124 (RPVDL), 160–163 (KVSV), Asp305, and Ile327.

It belongs to the EPSP synthase family. MurA subfamily.

Its subcellular location is the cytoplasm. It catalyses the reaction phosphoenolpyruvate + UDP-N-acetyl-alpha-D-glucosamine = UDP-N-acetyl-3-O-(1-carboxyvinyl)-alpha-D-glucosamine + phosphate. Its pathway is cell wall biogenesis; peptidoglycan biosynthesis. Its function is as follows. Cell wall formation. Adds enolpyruvyl to UDP-N-acetylglucosamine. The protein is UDP-N-acetylglucosamine 1-carboxyvinyltransferase of Cronobacter sakazakii (strain ATCC BAA-894) (Enterobacter sakazakii).